The primary structure comprises 174 residues: CASP-like protein 4D2 (174 aa).

Over Met-1–Lys-14 the chain is Cytoplasmic. The helical transmembrane segment at Val-15 to Leu-35 threads the bilayer. Residues Ser-36–Arg-60 are Extracellular-facing. The helical transmembrane segment at Tyr-61 to Ile-81 threads the bilayer. Residues Ser-82–Ser-150 are Cytoplasmic-facing. A helical transmembrane segment spans residues Leu-151–Ala-171. The Extracellular portion of the chain corresponds to Lys-172–Asn-174.

This sequence belongs to the Casparian strip membrane proteins (CASP) family. Homodimer and heterodimers.

It localises to the cell membrane. The protein is CASP-like protein 4D2 of Arabidopsis lyrata subsp. lyrata (Lyre-leaved rock-cress).